The chain runs to 911 residues: Alpha-actinin-4 (911 aa).

An actin-binding region spans residues 1–269 (MVDYHAANQS…YVSSFYHAFS (269 aa)). Positions 8–31 (NQSYQYGPSSGSNGAGGGGTMGDY) are disordered. The tract at residues 12-26 (QYGPSSGSNGAGGGG) is interaction with VCL. Phosphotyrosine is present on Y31. An interaction with VCL region spans residues 40–61 (RDLLLDPAWEKQQRKTFTAWCN). 2 consecutive Calponin-homology (CH) domains span residues 50-154 (KQQR…LRFA) and 163-269 (TSAK…HAFS). The LXXLL motif motif lies at 84–88 (LMLLL). Residues 108-126 (KINNVNKALDFIASKGVKL) form an interaction with VCL region. The residue at position 114 (K114) is an N6-acetyllysine. The polyphosphoinositide (PIP2)-binding stretch occupies residues 177 to 192 (TAPYKNVNVQNFHISW). K214 carries the post-translational modification N6-acetyllysine. At T249 the chain carries Phosphothreonine. Spectrin repeat units lie at residues 293–403 (HLME…WLLN), 413–518 (HLAE…ALEK), 528–639 (QLHL…ALLE), and 649–752 (HLRR…EVEN). Residues K592 and K625 each carry the N6-acetyllysine modification. S696 carries the post-translational modification Phosphoserine. A mediates interaction with MICALL2 region spans residues 736–911 (WEQLLTTIAR…STALYGESDL (176 aa)). EF-hand domains follow at residues 765 to 800 (EQMQ…LGYD) and 806 to 841 (QGDA…ETTD). D778 serves as a coordination point for Ca(2+). N6-acetyllysine is present on K779. Ca(2+) contacts are provided by D780 and E789. K859 carries the post-translational modification N6-acetyllysine. S909 bears the Phosphoserine mark.

This sequence belongs to the alpha-actinin family. As to quaternary structure, homodimer; antiparallel. Identified in a IGF2BP1-dependent mRNP granule complex containing untranslated mRNAs. Component of the CART complex, at least composed of ACTN4, HGS/HRS, MYO5B and TRIM3. Binds TRIM3 at the N-terminus. Interacts with MAGI1. Interacts with PDLIM2. Identified in a complex with CASK, IQGAP1, MAGI2, NPHS1, SPTAN1 and SPTBN1. Interacts with MICALL2 (preferentially in opened conformation); stimulated by RAB13 activation. Interacts with PPARG and RARA. Binds to VCL; this interaction triggers VCL conformational changes. Interacts with SEPTIN14. Interacts with IGSF8.

The protein localises to the nucleus. Its subcellular location is the cytoplasm. It is found in the cell junction. It localises to the cytoskeleton. The protein resides in the stress fiber. The protein localises to the perinuclear region. In terms of biological role, F-actin cross-linking protein which is thought to anchor actin to a variety of intracellular structures. This is a bundling protein. Probably involved in vesicular trafficking via its association with the CART complex. The CART complex is necessary for efficient transferrin receptor recycling but not for EGFR degradation. Involved in tight junction assembly in epithelial cells probably through interaction with MICALL2. Links MICALL2 to the actin cytoskeleton and recruits it to the tight junctions. May also function as a transcriptional coactivator, stimulating transcription mediated by the nuclear hormone receptors PPARG and RARA. Association with IGSF8 regulates the immune synapse formation and is required for efficient T-cell activation. This Bos taurus (Bovine) protein is Alpha-actinin-4.